A 523-amino-acid polypeptide reads, in one-letter code: Polyamine aminopropyltransferase (523 aa).

7 helical membrane passes run 20–40, 51–71, 88–108, 116–136, 164–184, 186–206, and 215–235; these read VLLAAVAACAACGLVYELALL, IVATSLIVAGYIAALGAGALL, AVLGIIGGLSAAALYAAFAFL, LVLAVGTALIGGLVGAEVPLL, LGALVGGLAWPFLLLPQLGMI, GAAVTGIVNLAAAGVVSIFLL, and LVTALCALAAALGLIATLLVH. Residues 203-478 are spermidine synthase; that stretch reads IFLLRHVVSG…APTPAVPSTA (276 aa). A PABS domain is found at 231–465; that stretch reads TLLVHSHDIE…GDWGFALARL (235 aa). Position 261 (Q261) interacts with S-methyl-5'-thioadenosine. D313 contributes to the spermidine binding site. Residues E333 and 365–366 contribute to the S-methyl-5'-thioadenosine site; that span reads DA. D386 functions as the Proton acceptor in the catalytic mechanism.

Belongs to the spermidine/spermine synthase family. In terms of assembly, homodimer or homotetramer.

The protein localises to the cell membrane. The enzyme catalyses S-adenosyl 3-(methylsulfanyl)propylamine + putrescine = S-methyl-5'-thioadenosine + spermidine + H(+). It functions in the pathway amine and polyamine biosynthesis; spermidine biosynthesis; spermidine from putrescine: step 1/1. Functionally, catalyzes the irreversible transfer of a propylamine group from the amino donor S-adenosylmethioninamine (decarboxy-AdoMet) to putrescine (1,4-diaminobutane) to yield spermidine. This is Polyamine aminopropyltransferase from Mycobacterium bovis (strain ATCC BAA-935 / AF2122/97).